The primary structure comprises 495 residues: Probable cytochrome P450 4s3 (495 aa).

2 residues coordinate heme: Glu307 and Cys436.

It belongs to the cytochrome P450 family. The cofactor is heme.

The protein resides in the endoplasmic reticulum membrane. It is found in the microsome membrane. In terms of biological role, may be involved in the metabolism of insect hormones and in the breakdown of synthetic insecticides. The chain is Probable cytochrome P450 4s3 (Cyp4s3) from Drosophila melanogaster (Fruit fly).